The sequence spans 262 residues: Acyl-[acyl-carrier-protein]--UDP-N-acetylglucosamine O-acyltransferase (262 aa).

Belongs to the transferase hexapeptide repeat family. LpxA subfamily. As to quaternary structure, homotrimer.

The protein localises to the cytoplasm. It catalyses the reaction a (3R)-hydroxyacyl-[ACP] + UDP-N-acetyl-alpha-D-glucosamine = a UDP-3-O-[(3R)-3-hydroxyacyl]-N-acetyl-alpha-D-glucosamine + holo-[ACP]. Its pathway is glycolipid biosynthesis; lipid IV(A) biosynthesis; lipid IV(A) from (3R)-3-hydroxytetradecanoyl-[acyl-carrier-protein] and UDP-N-acetyl-alpha-D-glucosamine: step 1/6. Involved in the biosynthesis of lipid A, a phosphorylated glycolipid that anchors the lipopolysaccharide to the outer membrane of the cell. The sequence is that of Acyl-[acyl-carrier-protein]--UDP-N-acetylglucosamine O-acyltransferase from Campylobacter curvus (strain 525.92).